We begin with the raw amino-acid sequence, 227 residues long: Probable cell wall protein PGA42 (227 aa).

A signal peptide spans 1–16 (MKFIILLFALIHITVA). Asn-192 carries an N-linked (GlcNAc...) asparagine glycan. The GPI-anchor amidated serine moiety is linked to residue Ser-200. Positions 201–227 (GSQIFVLCVISVVGFIFFFLFFLSLFV) are cleaved as a propeptide — removed in mature form.

It belongs to the IHD1 family. In terms of processing, the GPI-anchor is attached to the protein in the endoplasmic reticulum and serves to target the protein to the cell surface. There, the glucosamine-inositol phospholipid moiety is cleaved off and the GPI-modified mannoprotein is covalently attached via its lipidless GPI glycan remnant to the 1,6-beta-glucan of the outer cell wall layer.

The protein resides in the secreted. The protein localises to the cell wall. It is found in the membrane. Its function is as follows. Probable GPI-anchored cell wall protein that may be involved in cell wall organization, hyphal growth, as well as in virulence. The polypeptide is Probable cell wall protein PGA42 (PGA42) (Candida albicans (strain SC5314 / ATCC MYA-2876) (Yeast)).